A 178-amino-acid chain; its full sequence is NADH-quinone oxidoreductase subunit B (178 aa).

4 residues coordinate [4Fe-4S] cluster: cysteine 45, cysteine 46, cysteine 111, and cysteine 140.

It belongs to the complex I 20 kDa subunit family. NDH-1 is composed of 15 different subunits. Subunits NuoB, C, D, E, F, and G constitute the peripheral sector of the complex. [4Fe-4S] cluster serves as cofactor.

Its subcellular location is the cell membrane. It catalyses the reaction a quinone + NADH + 5 H(+)(in) = a quinol + NAD(+) + 4 H(+)(out). NDH-1 shuttles electrons from NADH, via FMN and iron-sulfur (Fe-S) centers, to quinones in the respiratory chain. The immediate electron acceptor for the enzyme in this species is believed to be a menaquinone. Couples the redox reaction to proton translocation (for every two electrons transferred, four hydrogen ions are translocated across the cytoplasmic membrane), and thus conserves the redox energy in a proton gradient. This chain is NADH-quinone oxidoreductase subunit B, found in Deinococcus deserti (strain DSM 17065 / CIP 109153 / LMG 22923 / VCD115).